A 120-amino-acid chain; its full sequence is Protein p14.5 (120 aa).

2 disordered regions span residues 1–27 and 80–120; these read MADF…LEYD and REFT…HKSK. An N-acetylalanine; by host modification is found at alanine 2. Over residues 103–120 the composition is skewed to basic residues; that stretch reads KPKKKKHLFPKLSSHKSK.

The protein belongs to the asfivirus structural protein p14.5 family. As to quaternary structure, interacts with the major capsid protein. Interacts with host IRF3; this interaction interferes with the recruitment of IRF3 to TBK1. Post-translationally, acetylated.

The protein localises to the virion. Its function is as follows. Structural protein required for transport of intracellular particles from the assembly sites to the plasma membrane. Binds to both ssDNA and dsDNA. Suppressed the activation of the cGAS/STING pathway by interfering with the recruitment of IRF3 to TBK1, which in turn suppresses IRF3 phosphorylation, decreasing interferon production. This chain is Protein p14.5, found in Ornithodoros (relapsing fever ticks).